Here is a 379-residue protein sequence, read N- to C-terminus: MKFITAILVIFCVYLLSTAGDSKILPLKKLPSKIFGHLKSHVDNTVKKPLKVFGHLKSHVENSVGPLRMNKLTPNCIFGVKSMSMVLFTKNIPDGKYISLDSDLGRDLDLTKTIYFTAHGFISNVNHSLSNRLSRALVEKDYTVFSLDWSDAACTTGGLPLVKLLGYPSAVQNTREIGNLMADYVMSLIDHGASLRNMAFIGHSLGSHVCGFASKKIYESGYGKVPLLFAADPAQPLFQLKQCPDRLCDTDAKLVITLHTSQIGLGYPIGGLDLYFNGGFVQPKCHLDITCAHIRSVLYLINMVEKKCSFPGIPATYKQILNPFSKFPYPNSKTTDCFVMDDSIFNPRRKSLQNLAGGIYYMFVDPDTFCTRKNFNCQR.

A signal peptide spans 1 to 20; the sequence is MKFITAILVIFCVYLLSTAG. A propeptide spanning residues 21–73 is cleaved from the precursor; that stretch reads DSKILPLKKLPSKIFGHLKSHVDNTVKKPLKVFGHLKSHVENSVGPLRMNKLT. An intrachain disulfide couples Cys-76 to Cys-154. N-linked (GlcNAc...) asparagine glycosylation is present at Asn-126. Ser-204 acts as the Nucleophile in catalysis. Asp-232 functions as the Charge relay system in the catalytic mechanism. Disulfide bonds link Cys-243-Cys-248 and Cys-285-Cys-291. His-293 serves as the catalytic Charge relay system.

The protein belongs to the AB hydrolase superfamily. Lipase family. Post-translationally, contains five disulfide bonds. In terms of tissue distribution, expressed by the venom gland.

The protein localises to the secreted. The catalysed reaction is a 1,2-diacyl-sn-glycero-3-phosphocholine + H2O = a 2-acyl-sn-glycero-3-phosphocholine + a fatty acid + H(+). Catalyzes the hydrolysis of phosphatidylcholine with phospholipase A1 activity. May act as an allergen and induce hemolytic activity. The polypeptide is Phospholipase A1 (Dinoponera quadriceps (South American ant)).